Consider the following 312-residue polypeptide: tRNA dimethylallyltransferase (312 aa).

11–18 (GLTATGKT) provides a ligand contact to ATP. 13 to 18 (TATGKT) contacts substrate. An interaction with substrate tRNA region spans residues 36–39 (DSMC).

Belongs to the IPP transferase family. As to quaternary structure, monomer. Mg(2+) serves as cofactor.

The catalysed reaction is adenosine(37) in tRNA + dimethylallyl diphosphate = N(6)-dimethylallyladenosine(37) in tRNA + diphosphate. Catalyzes the transfer of a dimethylallyl group onto the adenine at position 37 in tRNAs that read codons beginning with uridine, leading to the formation of N6-(dimethylallyl)adenosine (i(6)A). The protein is tRNA dimethylallyltransferase of Caldicellulosiruptor bescii (strain ATCC BAA-1888 / DSM 6725 / KCTC 15123 / Z-1320) (Anaerocellum thermophilum).